Consider the following 467-residue polypeptide: F-box only protein 6 (467 aa).

An F-box domain is found at 114-163; sequence QEIWQEFPQDLFEDVVSRLPMATFFQFRAVCRKWNALIDSDSFSRCFTEL. 3 Kelch repeats span residues 163–211, 252–305, and 406–456; these read LPQT…MASA, GMTL…NFKS, and CLGN…IACG.

In Arabidopsis thaliana (Mouse-ear cress), this protein is F-box only protein 6 (FBX6).